We begin with the raw amino-acid sequence, 133 residues long: Large ribosomal subunit protein uL15 (133 aa).

The interval 1–64 is disordered; that stretch reads MGLENLKPAK…QPLQRRLPKI (64 aa).

Belongs to the universal ribosomal protein uL15 family. As to quaternary structure, part of the 50S ribosomal subunit.

In terms of biological role, binds to the 23S rRNA. The protein is Large ribosomal subunit protein uL15 of Helicobacter pylori (strain Shi470).